We begin with the raw amino-acid sequence, 597 residues long: Gamma-terpinene synthase, chloroplastic (597 aa).

Residues 1–47 (MATLSMQVSILNKQLKNLNSFGMRASKLPLVARRVDVSTTRLRPICS) constitute a chloroplast transit peptide. Residues Asp350 and Asp354 each contribute to the Mn(2+) site. The DDXXD motif motif lies at 350-354 (DDVYD). 2 homodimerization regions span residues 356–362 (YGTLDEL) and 428–464 (EAKW…YFTL). Residues Asp494 and Glu502 each coordinate Mn(2+).

This sequence belongs to the terpene synthase family. Homodimer. Mn(2+) is required as a cofactor. Requires Mg(2+) as cofactor.

The protein resides in the plastid. It is found in the chloroplast. The catalysed reaction is (2E)-geranyl diphosphate = gamma-terpinene + diphosphate. It participates in secondary metabolite biosynthesis; terpenoid biosynthesis. Functionally, involved in the biosynthesis of phenolic monoterpenes natural products thymol and carvacrol which have a broad range of biological activities acting as antimicrobial compounds, insecticides, antioxidants and pharmaceutical agents. Monoterpene synthase which catalyzes the conversion of geranyl diphosphate (GPP) to gamma-terpinene and minor amounts of other monoterpenes (e.g. alpha-thujene, alpha-terpinene, myrcene, sabinene, (+)-R-limonene, alpha-pinene and alpha-phellandrene). The protein is Gamma-terpinene synthase, chloroplastic of Thymus caespititius (Cretan thyme).